The sequence spans 117 residues: Large ribosomal subunit protein bL20 (117 aa).

This sequence belongs to the bacterial ribosomal protein bL20 family.

Its function is as follows. Binds directly to 23S ribosomal RNA and is necessary for the in vitro assembly process of the 50S ribosomal subunit. It is not involved in the protein synthesizing functions of that subunit. The protein is Large ribosomal subunit protein bL20 of Pelotomaculum thermopropionicum (strain DSM 13744 / JCM 10971 / SI).